Consider the following 267-residue polypeptide: Large ribosomal subunit protein uL4 (267 aa).

This sequence belongs to the universal ribosomal protein uL4 family. In terms of assembly, part of the 50S ribosomal subunit.

In terms of biological role, one of the primary rRNA binding proteins, this protein initially binds near the 5'-end of the 23S rRNA. It is important during the early stages of 50S assembly. It makes multiple contacts with different domains of the 23S rRNA in the assembled 50S subunit and ribosome. Forms part of the polypeptide exit tunnel. This Saccharolobus islandicus (strain M.16.27) (Sulfolobus islandicus) protein is Large ribosomal subunit protein uL4.